Here is a 511-residue protein sequence, read N- to C-terminus: Voltage-gated potassium channel KCNC1 (511 aa).

Residues 1-190 (MGQGDESERI…EDPYSSRYAR (190 aa)) are Cytoplasmic-facing. Ser-44 is subject to Phosphoserine. Residues His-77, Cys-83, Cys-104, and Cys-105 each contribute to the Zn(2+) site. Residues 121–147 (SFGGAPLDNSADDADADGPGDSGDGED) are disordered. A phosphoserine mark is found at Ser-130, Ser-142, Ser-158, and Ser-160. The span at 130–147 (SADDADADGPGDSGDGED) shows a compositional bias: acidic residues. A helical membrane pass occupies residues 191 to 209 (YVAFASLFFILVSITTFCL). Asn-220 and Asn-229 each carry an N-linked (GlcNAc...) asparagine glycan. The helical transmembrane segment at 248-267 (IEGVCVVWFTFEFLMRVVFC) threads the bilayer. Over 268-276 (PNKVEFIKN) the chain is Cytoplasmic. The chain crosses the membrane as a helical span at residues 277 to 295 (SLNIIDFVAILPFYLEVGL). A helical; Voltage-sensor membrane pass occupies residues 309-331 (FLRVVRFVRILRIFKLTRHFVGL). Topologically, residues 332 to 344 (RVLGHTLRASTNE) are cytoplasmic. Residues 345-366 (FLLLIIFLALGVLIFATMIYYA) traverse the membrane as a helical segment. The K(+) site is built by Thr-400, Leu-401, Gly-402, and Tyr-403. The Selectivity filter motif lies at 400–405 (TLGYGD). A helical membrane pass occupies residues 415–436 (LVGALCALAGVLTIAMPVPVIV). The Cytoplasmic portion of the chain corresponds to 437–511 (NNFGMYYSLA…GRKPLRGMSI (75 aa)). Residue Ser-474 is modified to Phosphoserine. Position 483 is a phosphothreonine (Thr-483).

It belongs to the potassium channel family. C (Shaw) (TC 1.A.1.2) subfamily. Kv3.1/KCNC1 sub-subfamily. In terms of assembly, homotetramer. Homomultimer. Heteromultimer with KCNG3, KCNG4 and KCNV2. Heteromultimer with KCNC2. Heterotetramer with KCNC3. Interacts with the ancillary subunits KCNE1 and KCNE2; the interaction modulates channel activity. N-glycosylated; contains sialylated glycans. In terms of tissue distribution, detected in cerebellum. Detected in brain (at protein level). Detected in brain.

The protein resides in the cell membrane. It localises to the cell projection. It is found in the axon. The protein localises to the presynaptic cell membrane. It carries out the reaction K(+)(in) = K(+)(out). Voltage-gated potassium channel that opens in response to the voltage difference across the membrane and through which potassium ions pass in accordance with their electrochemical gradient. The mechanism is time-dependent and inactivation is slow. Plays an important role in the rapid repolarization of fast-firing brain neurons. Can form functional homotetrameric channels and heterotetrameric channels that contain variable proportions of KCNC2, and possibly other family members as well. Contributes to fire sustained trains of very brief action potentials at high frequency in pallidal neurons. The protein is Voltage-gated potassium channel KCNC1 of Mus musculus (Mouse).